The chain runs to 63 residues: Translational regulator CsrA (63 aa).

It belongs to the CsrA/RsmA family. In terms of assembly, homodimer; the beta-strands of each monomer intercalate to form a hydrophobic core, while the alpha-helices form wings that extend away from the core.

The protein resides in the cytoplasm. Its function is as follows. A key translational regulator that binds mRNA to regulate translation initiation and/or mRNA stability. Mediates global changes in gene expression, shifting from rapid growth to stress survival by linking envelope stress, the stringent response and the catabolite repression systems. Usually binds in the 5'-UTR; binding at or near the Shine-Dalgarno sequence prevents ribosome-binding, repressing translation, binding elsewhere in the 5'-UTR can activate translation and/or stabilize the mRNA. Its function is antagonized by small RNA(s). The sequence is that of Translational regulator CsrA from Haemophilus influenzae (strain PittEE).